The primary structure comprises 490 residues: Probable glycine dehydrogenase (decarboxylating) subunit 2 (490 aa).

Lysine 273 is modified (N6-(pyridoxal phosphate)lysine).

Belongs to the GcvP family. C-terminal subunit subfamily. As to quaternary structure, the glycine cleavage system is composed of four proteins: P, T, L and H. In this organism, the P 'protein' is a heterodimer of two subunits. Pyridoxal 5'-phosphate is required as a cofactor.

The catalysed reaction is N(6)-[(R)-lipoyl]-L-lysyl-[glycine-cleavage complex H protein] + glycine + H(+) = N(6)-[(R)-S(8)-aminomethyldihydrolipoyl]-L-lysyl-[glycine-cleavage complex H protein] + CO2. Its function is as follows. The glycine cleavage system catalyzes the degradation of glycine. The P protein binds the alpha-amino group of glycine through its pyridoxal phosphate cofactor; CO(2) is released and the remaining methylamine moiety is then transferred to the lipoamide cofactor of the H protein. In Staphylococcus aureus (strain MRSA252), this protein is Probable glycine dehydrogenase (decarboxylating) subunit 2.